We begin with the raw amino-acid sequence, 435 residues long: Tol-Pal system protein TolB (435 aa).

The signal sequence occupies residues 1–26 (MKIFSPIRLVLAIAALMSVFSAPAFA).

Belongs to the TolB family. As to quaternary structure, the Tol-Pal system is composed of five core proteins: the inner membrane proteins TolA, TolQ and TolR, the periplasmic protein TolB and the outer membrane protein Pal. They form a network linking the inner and outer membranes and the peptidoglycan layer.

Its subcellular location is the periplasm. Part of the Tol-Pal system, which plays a role in outer membrane invagination during cell division and is important for maintaining outer membrane integrity. The protein is Tol-Pal system protein TolB of Agrobacterium fabrum (strain C58 / ATCC 33970) (Agrobacterium tumefaciens (strain C58)).